Consider the following 178-residue polypeptide: Glucagon-1 (178 aa).

An N-terminal signal peptide occupies residues 1 to 21; sequence MFGIHSLAGVLLLVIVQRQLA. Propeptides lie at residues 83-87, 123-134, and 171-178; these read SGAPS, ESAEESRNGPMS, and SNKRQEDH.

Belongs to the glucagon family.

Its subcellular location is the secreted. Promotes hydrolysis of glycogen and lipids, and raises the blood sugar level. The polypeptide is Glucagon-1 (gcg1) (Oncorhynchus mykiss (Rainbow trout)).